Reading from the N-terminus, the 510-residue chain is NAD(P)H-quinone oxidoreductase subunit 2 A, chloroplastic (510 aa).

A run of 13 helical transmembrane segments spans residues 24–44 (LLLFDGSLIFPECILIFGLIL), 57–77 (IPWLYFISSTSLVMSITALLF), 99–119 (IFQFLILLCSTLCIPLSVEYI), 124–144 (MAITEFLLFVLTATLGGMFLC), 149–169 (LITIFVAPECFSLCSYLLSGY), 183–203 (YLLMGGASSSILVHGFSWLYG), 227–247 (PGISIALIFITVGIGFKLSPA), 295–315 (WHLLLEILAILSMILGNLIAI), 323–343 (MLAYSSIGQIGYVIIGIIVGD), 354–374 (YMLFYISMNLGTFACIVLFGL), 395–415 (ALSLALCLLSLGGLPPLAGFF), 418–438 (LYLFWCGWQAGLYFLVLIGLL), and 484–504 (MIVCVIASTIPGISMNPIIAI).

It belongs to the complex I subunit 2 family. In terms of assembly, NDH is composed of at least 16 different subunits, 5 of which are encoded in the nucleus.

The protein localises to the plastid. It is found in the chloroplast thylakoid membrane. The enzyme catalyses a plastoquinone + NADH + (n+1) H(+)(in) = a plastoquinol + NAD(+) + n H(+)(out). It catalyses the reaction a plastoquinone + NADPH + (n+1) H(+)(in) = a plastoquinol + NADP(+) + n H(+)(out). Its function is as follows. NDH shuttles electrons from NAD(P)H:plastoquinone, via FMN and iron-sulfur (Fe-S) centers, to quinones in the photosynthetic chain and possibly in a chloroplast respiratory chain. The immediate electron acceptor for the enzyme in this species is believed to be plastoquinone. Couples the redox reaction to proton translocation, and thus conserves the redox energy in a proton gradient. The polypeptide is NAD(P)H-quinone oxidoreductase subunit 2 A, chloroplastic (Panax ginseng (Korean ginseng)).